The primary structure comprises 95 residues: Cell division topological specificity factor (95 aa).

It belongs to the MinE family.

In terms of biological role, prevents the cell division inhibition by proteins MinC and MinD at internal division sites while permitting inhibition at polar sites. This ensures cell division at the proper site by restricting the formation of a division septum at the midpoint of the long axis of the cell. The chain is Cell division topological specificity factor from Synechococcus sp. (strain CC9902).